Reading from the N-terminus, the 360-residue chain is Photosystem II protein D1 2 (360 aa).

3 consecutive transmembrane segments (helical) span residues 29–46, 118–133, and 142–156; these read YVGW…TATT, HFLI…EWEL, and WICV…AATA. A chlorophyll a-binding site is contributed by His118. Position 126 (Tyr126) interacts with pheophytin a. Residues Asp170 and Glu189 each coordinate [CaMn4O5] cluster. A helical membrane pass occupies residues 197-218; the sequence is FHMLGVAGVFGGSLFSAMHGSL. Residue His198 participates in chlorophyll a binding. A quinone-binding positions include His215 and 264–265; that span reads SF. His215 lines the Fe cation pocket. Position 272 (His272) interacts with Fe cation. The chain crosses the membrane as a helical span at residues 274-288; the sequence is FLGAWPVVGIWFTAL. Residues His332, Glu333, Asp342, and Ala344 each contribute to the [CaMn4O5] cluster site. A propeptide spanning residues 345–360 is cleaved from the precursor; the sequence is AGEQAPVALQAPAING.

Belongs to the reaction center PufL/M/PsbA/D family. In terms of assembly, PSII is composed of 1 copy each of membrane proteins PsbA, PsbB, PsbC, PsbD, PsbE, PsbF, PsbH, PsbI, PsbJ, PsbK, PsbL, PsbM, PsbT, PsbX, PsbY, PsbZ, Psb30/Ycf12, peripheral proteins PsbO, CyanoQ (PsbQ), PsbU, PsbV and a large number of cofactors. It forms dimeric complexes. The D1/D2 heterodimer binds P680, chlorophylls that are the primary electron donor of PSII, and subsequent electron acceptors. It shares a non-heme iron and each subunit binds pheophytin, quinone, additional chlorophylls, carotenoids and lipids. D1 provides most of the ligands for the Mn4-Ca-O5 cluster of the oxygen-evolving complex (OEC). There is also a Cl(-1) ion associated with D1 and D2, which is required for oxygen evolution. The PSII complex binds additional chlorophylls, carotenoids and specific lipids. serves as cofactor. Tyr-161 forms a radical intermediate that is referred to as redox-active TyrZ, YZ or Y-Z. In terms of processing, C-terminally processed by CtpA; processing is essential to allow assembly of the oxygen-evolving complex and thus photosynthetic growth.

Its subcellular location is the cellular thylakoid membrane. The catalysed reaction is 2 a plastoquinone + 4 hnu + 2 H2O = 2 a plastoquinol + O2. In terms of biological role, photosystem II (PSII) is a light-driven water:plastoquinone oxidoreductase that uses light energy to abstract electrons from H(2)O, generating O(2) and a proton gradient subsequently used for ATP formation. It consists of a core antenna complex that captures photons, and an electron transfer chain that converts photonic excitation into a charge separation. The D1/D2 (PsbA/PsbD) reaction center heterodimer binds P680, the primary electron donor of PSII as well as several subsequent electron acceptors. The protein is Photosystem II protein D1 2 of Picosynechococcus sp. (strain ATCC 27264 / PCC 7002 / PR-6) (Agmenellum quadruplicatum).